The chain runs to 146 residues: uncharacterized protein (146 aa).

Positions 1–137 (MLSQEFFNSF…TINVMNQIHK (137 aa)) constitute an HTH marR-type domain.

This is an uncharacterized protein from Staphylococcus aureus (strain MW2).